A 263-amino-acid polypeptide reads, in one-letter code: MSLNPVIFSIGPVSIYWYSLAYVLGIVFAYWYLHKLDDQKIFTKNFYDSLLTATIVGIILGGRLGYVLIYDPVLYISNPIEILKTWEGGMSFHGGAIGVLLAVIISCKRHNIPTFYALDLVSCGVPIGLFLGRIGNFINGELFGRVTTMPWGMVFPESGDNLLHHPSQLYEALFEGLLLFAVANSLFFLTRIRLYHGALTGIAVMWYGIARFFVEFFREPDYQIGYLWLDLTMGQLLSIPMVLLGMLVYLGALNLKFNTKSVT.

The next 4 helical transmembrane spans lie at 6–26, 50–70, 85–105, and 112–132; these read VIFS…VLGI, LLTA…VLIY, TWEG…AVII, and IPTF…LFLG. Position 133 (Arg-133) interacts with a 1,2-diacyl-sn-glycero-3-phospho-(1'-sn-glycerol). Transmembrane regions (helical) follow at residues 169-189, 197-217, and 233-253; these read LYEA…LFFL, GALT…VEFF, and MGQL…LGAL.

It belongs to the Lgt family.

The protein localises to the cell membrane. The enzyme catalyses L-cysteinyl-[prolipoprotein] + a 1,2-diacyl-sn-glycero-3-phospho-(1'-sn-glycerol) = an S-1,2-diacyl-sn-glyceryl-L-cysteinyl-[prolipoprotein] + sn-glycerol 1-phosphate + H(+). The protein operates within protein modification; lipoprotein biosynthesis (diacylglyceryl transfer). Catalyzes the transfer of the diacylglyceryl group from phosphatidylglycerol to the sulfhydryl group of the N-terminal cysteine of a prolipoprotein, the first step in the formation of mature lipoproteins. The polypeptide is Phosphatidylglycerol--prolipoprotein diacylglyceryl transferase (Wolbachia pipientis wMel).